A 150-amino-acid chain; its full sequence is Large ribosomal subunit protein uL22c (150 aa).

The protein belongs to the universal ribosomal protein uL22 family. In terms of assembly, part of the 50S ribosomal subunit.

The protein resides in the plastid. It is found in the chloroplast. This protein binds specifically to 23S rRNA. Its function is as follows. The globular domain of the protein is located near the polypeptide exit tunnel on the outside of the subunit, while an extended beta-hairpin is found that lines the wall of the exit tunnel in the center of the 70S ribosome. The sequence is that of Large ribosomal subunit protein uL22c (rpl22) from Fagopyrum esculentum subsp. ancestrale (Wild buckwheat).